The chain runs to 65 residues: Large ribosomal subunit protein bL35 (65 aa).

The interval 1-51 (MPKIKTNRGAAKRFRKSASGRVKRGNAFTSHILTHKTRKNKRNLRGTSMVS) is disordered. Basic residues-rich tracts occupy residues 10 to 24 (AAKR…RVKR) and 33 to 44 (LTHKTRKNKRNL).

The protein belongs to the bacterial ribosomal protein bL35 family.

The polypeptide is Large ribosomal subunit protein bL35 (Pelobacter propionicus (strain DSM 2379 / NBRC 103807 / OttBd1)).